We begin with the raw amino-acid sequence, 678 residues long: RNA helicase NPH-II (678 aa).

One can recognise a Helicase ATP-binding domain in the interval 175-351 (FESWIHHVPV…EFFTESVFVH (177 aa)). 188-195 (GDTGVGKT) provides a ligand contact to ATP. Residues 300–303 (DEVH) carry the DEXH box motif. One can recognise a Helicase C-terminal domain in the interval 371–546 (SLNKFMYIEE…VFDLQLPEDL (176 aa)).

The protein belongs to the DEAD box helicase family. DEAH subfamily. In terms of assembly, monomer.

Its subcellular location is the virion. The enzyme catalyses ATP + H2O = ADP + phosphate + H(+). NTP-dependent helicase that catalyzes unidirectional unwinding of 3'tailed duplex RNAs and plays an important role during transcription of early mRNAs, presumably by preventing R-loop formation behind the elongating RNA polymerase. Might also play a role in the export of newly synthesized mRNA chains out of the core into the cytoplasm. Required for replication and propagation of viral particles. The chain is RNA helicase NPH-II (OPG084) from Oryctolagus cuniculus (Rabbit).